The sequence spans 741 residues: MKLFKNWSDVNNVKQRQLLLAYFRFILKQIVKSWLLWVTAGLVLFLLALVLLIIPAFTKQDPLFLWSHPVVQMSSLIIPFIALFATIITFQVFINGYYNGLEILLITRFFTRGRLFFARLAVLFIWITGTAFLSGLFVSLTATLGATSQTVTDLVLSVFFGVLLLSLLFSCVLIIIAQFLNRTQSMLLLLLGVSLASFTTVILAFSIKPPSENLRDNGYQPLNLSLISKSKSKSVENVFTIIDSSNVSDPRNKKKSIVKTNPQAIWDEYGESSFFQSQYYWNVGYWINSLFRLNSLSDYRNFDVNLYFLNTKLNFDREVDTDKMVDFVSFRDQRHLYFLSYSFFINTHNLPTQPLPRILTYDNNGAFLEKIVPSFDDIKLDPPRVKKVYKFFSDTIIQSFRDYEAEEKERQEKEEKEKAEKDNGNGQDSNKVNSVSTEPNNKNSSDADSKDNNDSSDSQGKDSSKSKPKFRPRLPQFFDRVSINYSKFSSSFNTQLKHIHQGLSTRDEAMEIFKDKVALFYALSMAYDNFTFQKDSGIIDNTSLNKFKTEFNKKQKELTEKNKQKQDGKDQKSQRMTQGADKAVTVEPKAMQSEIGMTDQTNDQSSSETKDSMDSSDSSDTVDNTDESEDKQSEEEEKFDEEIENAKKMPKAEDAFFNTASIWLSSPFLFFENGAKREQRYEIHLLNSNTQVNNEIIKTNSFYYVSGEPIVGQEVIIAMVLVVTLGLLVGSFFAYQKRDIK.

Helical transmembrane passes span 34-54 (WLLW…LLII), 76-96 (LIIP…FING), 120-140 (LAVL…FVSL), 156-176 (LSVF…LIII), and 187-207 (LLLL…AFSI). Over residues 404 to 423 (EAEEKERQEKEEKEKAEKDN) the composition is skewed to basic and acidic residues. Disordered regions lie at residues 404–473 (EAEE…FRPR) and 555–647 (QKEL…ENAK). Positions 424-439 (GNGQDSNKVNSVSTEP) are enriched in polar residues. Basic and acidic residues-rich tracts occupy residues 445–465 (SDAD…DSSK) and 555–573 (QKEL…DQKS). The segment covering 623 to 643 (DNTDESEDKQSEEEEKFDEEI) has biased composition (acidic residues). 2 helical membrane passes run 655 to 675 (AFFN…ENGA) and 715 to 735 (VIIA…FFAY).

To M.pneumoniae MPN_333.

The protein resides in the cell membrane. This is an uncharacterized protein from Mycoplasma pneumoniae (strain ATCC 29342 / M129 / Subtype 1) (Mycoplasmoides pneumoniae).